We begin with the raw amino-acid sequence, 424 residues long: CinA-like protein (424 aa).

It belongs to the CinA family.

In Shewanella baltica (strain OS195), this protein is CinA-like protein.